The chain runs to 271 residues: Type III pantothenate kinase (271 aa).

6 to 13 (DVRNTHTV) lines the ATP pocket. Position 109-112 (109-112 (GADR)) interacts with substrate. Asp111 functions as the Proton acceptor in the catalytic mechanism. K(+) is bound at residue Asp131. Ser134 lines the ATP pocket. Thr186 lines the substrate pocket.

Belongs to the type III pantothenate kinase family. As to quaternary structure, homodimer. It depends on NH4(+) as a cofactor. K(+) serves as cofactor.

The protein localises to the cytoplasm. It carries out the reaction (R)-pantothenate + ATP = (R)-4'-phosphopantothenate + ADP + H(+). It functions in the pathway cofactor biosynthesis; coenzyme A biosynthesis; CoA from (R)-pantothenate: step 1/5. Functionally, catalyzes the phosphorylation of pantothenate (Pan), the first step in CoA biosynthesis. In Mycolicibacterium vanbaalenii (strain DSM 7251 / JCM 13017 / BCRC 16820 / KCTC 9966 / NRRL B-24157 / PYR-1) (Mycobacterium vanbaalenii), this protein is Type III pantothenate kinase.